Here is a 1796-residue protein sequence, read N- to C-terminus: U3 small nucleolar RNA-associated protein 10 (1796 aa).

12 HEAT repeats span residues 586 to 623 (LDLQ…SNAE), 656 to 692 (LLQE…SATG), 861 to 898 (DLTT…SDHS), 983 to 1021 (DTSV…TAPD), 1052 to 1089 (QTIK…AYEH), 1161 to 1198 (QPKP…VLSS), 1258 to 1295 (LSIG…QESN), 1302 to 1340 (TVLL…KYGK), 1344 to 1383 (EAVA…VLQD), 1492 to 1529 (SAVE…SALD), 1711 to 1748 (DHRK…TLGE), and 1752 to 1789 (EMLS…ILGE). The disordered stretch occupies residues 881–901 (TTDSPATKRRRTSSSDHSRGV).

This sequence belongs to the HEATR1/UTP10 family. Component of the ribosomal small subunit (SSU) processome.

The protein localises to the nucleus. Its subcellular location is the nucleolus. Its function is as follows. Involved in nucleolar processing of pre-18S ribosomal RNA. Involved in ribosome biosynthesis. This chain is U3 small nucleolar RNA-associated protein 10, found in Pyricularia oryzae (strain 70-15 / ATCC MYA-4617 / FGSC 8958) (Rice blast fungus).